The chain runs to 786 residues: Probable glutamine--tRNA ligase (786 aa).

Residues 181 to 198 (DLAPKKKEKKPEGPKPSK) are compositionally biased toward basic and acidic residues. Positions 181 to 218 (DLAPKKKEKKPEGPKPSKDAAAAATAPGTKNQKEASPE) are disordered. The 'HIGH' region motif lies at 276 to 286 (PEPNGVLHIGH). ATP is bound by residues 277-279 (EPN) and 283-289 (HIGHAKA). Positions 309 and 444 each coordinate L-glutamine. Residues threonine 463, 492–493 (RL), and 500–502 (VSK) each bind ATP. The short motif at 499 to 503 (VVSKR) is the 'KMSKS' region element.

The protein belongs to the class-I aminoacyl-tRNA synthetase family.

The catalysed reaction is tRNA(Gln) + L-glutamine + ATP = L-glutaminyl-tRNA(Gln) + AMP + diphosphate. This is Probable glutamine--tRNA ligase from Caenorhabditis elegans.